We begin with the raw amino-acid sequence, 129 residues long: Glycine cleavage system H protein (129 aa).

Residues 24–106 (LLKIGVSEFA…IGEGWLVILK (83 aa)) form the Lipoyl-binding domain. Lys-65 bears the N6-lipoyllysine mark.

The protein belongs to the GcvH family. In terms of assembly, the glycine cleavage system is composed of four proteins: P, T, L and H. Requires (R)-lipoate as cofactor.

Functionally, the glycine cleavage system catalyzes the degradation of glycine. The H protein shuttles the methylamine group of glycine from the P protein to the T protein. This chain is Glycine cleavage system H protein, found in Prochlorococcus marinus (strain AS9601).